Reading from the N-terminus, the 154-residue chain is Interleukin-2 (154 aa).

The signal sequence occupies residues 1-20; the sequence is MYKLQLLSCIALTLALVANS. O-linked (GalNAc...) threonine glycosylation is present at T23. An intrachain disulfide couples C78 to C126.

The protein belongs to the IL-2 family.

It is found in the secreted. In terms of biological role, cytokine produced by activated CD4-positive helper T-cells and to a lesser extend activated CD8-positive T-cells and natural killer (NK) cells that plays pivotal roles in the immune response and tolerance. Binds to a receptor complex composed of either the high-affinity trimeric IL-2R (IL2RA/CD25, IL2RB/CD122 and IL2RG/CD132) or the low-affinity dimeric IL-2R (IL2RB and IL2RG). Interaction with the receptor leads to oligomerization and conformation changes in the IL-2R subunits resulting in downstream signaling starting with phosphorylation of JAK1 and JAK3. In turn, JAK1 and JAK3 phosphorylate the receptor to form a docking site leading to the phosphorylation of several substrates including STAT5. This process leads to activation of several pathways including STAT, phosphoinositide-3-kinase/PI3K and mitogen-activated protein kinase/MAPK pathways. Functions as a T-cell growth factor and can increase NK-cell cytolytic activity as well. Promotes strong proliferation of activated B-cells and subsequently immunoglobulin production. Plays a pivotal role in regulating the adaptive immune system by controlling the survival and proliferation of regulatory T-cells, which are required for the maintenance of immune tolerance. Moreover, participates in the differentiation and homeostasis of effector T-cell subsets, including Th1, Th2, Th17 as well as memory CD8-positive T-cells. This is Interleukin-2 (IL2) from Lama glama (Llama).